We begin with the raw amino-acid sequence, 428 residues long: Histone deacetylase 3 (428 aa).

Residues 3-316 form a histone deacetylase region; that stretch reads KTVAYFYDPD…WTYETSLLVE (314 aa). Positions 17, 21, and 25 each coordinate 1D-myo-inositol 1,4,5,6-tetrakisphosphate. The active site involves His135. 3 residues coordinate Zn(2+): Asp170, His172, and Asp259. Arg265 contributes to the 1D-myo-inositol 1,4,5,6-tetrakisphosphate binding site. Composition is skewed to basic and acidic residues over residues 388–405 and 415–428; these read DRTDEADAEERGPEENYS and DGDHDNDKESDVEI. A disordered region spans residues 388-428; the sequence is DRTDEADAEERGPEENYSRPEAPNEFYDGDHDNDKESDVEI. The residue at position 424 (Ser424) is a Phosphoserine.

This sequence belongs to the histone deacetylase family. HD type 1 subfamily. Interacts with HDAC7 and HDAC9. Interacts with DAXX, KDM4A, HDAC10 and DACH1. Found in a complex with NCOR1 and NCOR2. Component of the N-Cor repressor complex, at least composed of NCOR1, NCOR2, HDAC3, TBL1X, TBL1R, CORO2A and GPS2. Interacts with BCOR, MJD2A/JHDM3A, NRIP1, PRDM6 and SRY. Interacts with BTBD14B. Interacts with GLIS2. Interacts (via the DNA-binding domain) with NR2C1; the interaction recruits phosphorylated NR2C1 to PML bodies for sumoylation. Component of the Notch corepressor complex. Interacts with CBFA2T3 and NKAP. Interacts with APEX1; the interaction is not dependent on the acetylated status of APEX1. Interacts with ZMYND15. Interacts with SMRT/NCOR2 and BCL6 on DNA enhancer elements. Interacts with INSM1. Interacts with XBP1 isoform 1; the interaction occurs in endothelial cell (EC) under disturbed flow. Interacts (via C-terminus) with CCAR2 (via N-terminus). Interacts with and deacetylates MEF2D. Interacts with BEND3. Interacts with NKAPL. Interacts with DHX36; this interaction occurs in a RNA-dependent manner. Interacts weakly with CRY1; this interaction is enhanced in the presence of FBXL3. Interacts with FBXL3 and BMAL1. Interacts with NCOR1. Interacts with RARA. Interacts with SETD5. As to quaternary structure, (Microbial infection) Interacts with human cytomegalovirus (HHV-5) immediate early protein IE1; this interaction decreases histone acetylation and allows transcriptional activation by the virus. The cofactor is Zn(2+). In terms of processing, sumoylated in vitro. Deubiquitinated on 'Lys-63'-linked ubiquitin chains by USP38; leading to a decreased level of histone acetylation. In terms of tissue distribution, widely expressed.

It is found in the nucleus. The protein localises to the chromosome. Its subcellular location is the cytoplasm. It localises to the cytosol. The enzyme catalyses N(6)-acetyl-L-lysyl-[histone] + H2O = L-lysyl-[histone] + acetate. It carries out the reaction N(6)-acetyl-L-lysyl-[protein] + H2O = L-lysyl-[protein] + acetate. The catalysed reaction is N(6)-(2E)-butenoyl-L-lysyl-[protein] + H2O = (2E)-2-butenoate + L-lysyl-[protein]. It catalyses the reaction N(6)-(2-hydroxyisobutanoyl)-L-lysyl-[protein] + H2O = 2-hydroxy-2-methylpropanoate + L-lysyl-[protein]. The enzyme catalyses N(6)-[(S)-lactoyl]-L-lysyl-[protein] + H2O = (S)-lactate + L-lysyl-[protein]. With respect to regulation, inositol tetraphosphate (1D-myo-inositol 1,4,5,6-tetrakisphosphate) promotes the histone deacetylase activity by acting as an intermolecular glue between HDAC3 and NCOR2, thereby promoting its association with the N-Cor complex, a prerequisite for the histone deacetylase activity. In terms of biological role, histone deacetylase that catalyzes the deacetylation of lysine residues on the N-terminal part of the core histones (H2A, H2B, H3 and H4), and some other non-histone substrates. Histone deacetylation gives a tag for epigenetic repression and plays an important role in transcriptional regulation, cell cycle progression and developmental events. Histone deacetylases act via the formation of large multiprotein complexes, such as N-Cor repressor complex, which activate the histone deacetylase activity. Participates in the BCL6 transcriptional repressor activity by deacetylating the H3 'Lys-27' (H3K27) on enhancer elements, antagonizing EP300 acetyltransferase activity and repressing proximal gene expression. Acts as a molecular chaperone for shuttling phosphorylated NR2C1 to PML bodies for sumoylation. Contributes, together with XBP1 isoform 1, to the activation of NFE2L2-mediated HMOX1 transcription factor gene expression in a PI(3)K/mTORC2/Akt-dependent signaling pathway leading to endothelial cell (EC) survival under disturbed flow/oxidative stress. Regulates both the transcriptional activation and repression phases of the circadian clock in a deacetylase activity-independent manner. During the activation phase, promotes the accumulation of ubiquitinated BMAL1 at the E-boxes and during the repression phase, blocks FBXL3-mediated CRY1/2 ubiquitination and promotes the interaction of CRY1 and BMAL1. The NCOR1-HDAC3 complex regulates the circadian expression of the core clock gene BMAL1 and the genes involved in lipid metabolism in the liver. Also functions as a deacetylase for non-histone targets, such as KAT5, MEF2D, MAPK14, RARA and STAT3. Serves as a corepressor of RARA, mediating its deacetylation and repression, leading to inhibition of RARE DNA element binding. In association with RARA, plays a role in the repression of microRNA-10a and thereby in the inflammatory response. In addition to protein deacetylase activity, also acts as a protein-lysine deacylase by recognizing other acyl groups: catalyzes removal of (2E)-butenoyl (crotonyl), lactoyl (lactyl) and 2-hydroxyisobutanoyl (2-hydroxyisobutyryl) acyl groups from lysine residues, leading to protein decrotonylation, delactylation and de-2-hydroxyisobutyrylation, respectively. Catalyzes decrotonylation of MAPRE1/EB1. Mediates delactylation NBN/NBS1, thereby inhibiting DNA double-strand breaks (DSBs) via homologous recombination (HR). The protein is Histone deacetylase 3 (HDAC3) of Homo sapiens (Human).